Here is a 360-residue protein sequence, read N- to C-terminus: D-alanine--D-alanine ligase (360 aa).

Residues 146-352 (KLCVADAGIA…YRNLITRLLE (207 aa)) enclose the ATP-grasp domain. Position 179 to 234 (179 to 234 (EAQVSYPLFVKPASLGSSIGISKVHNREELHPALQAACALDWKVVVESTVKGREIE)) interacts with ATP. D305, E319, and N321 together coordinate Mg(2+).

The protein belongs to the D-alanine--D-alanine ligase family. Requires Mg(2+) as cofactor. Mn(2+) serves as cofactor.

The protein localises to the cytoplasm. The catalysed reaction is 2 D-alanine + ATP = D-alanyl-D-alanine + ADP + phosphate + H(+). The protein operates within cell wall biogenesis; peptidoglycan biosynthesis. In terms of biological role, cell wall formation. In Chlorobium chlorochromatii (strain CaD3), this protein is D-alanine--D-alanine ligase.